We begin with the raw amino-acid sequence, 180 residues long: Alkyl hydroperoxide reductase AhpD (180 aa).

Cys131 serves as the catalytic Proton donor. Cys131 and Cys134 form a disulfide bridge. Cys134 serves as the catalytic Cysteine sulfenic acid (-SOH) intermediate.

This sequence belongs to the AhpD family.

It catalyses the reaction N(6)-[(R)-dihydrolipoyl]-L-lysyl-[lipoyl-carrier protein] + a hydroperoxide = N(6)-[(R)-lipoyl]-L-lysyl-[lipoyl-carrier protein] + an alcohol + H2O. In terms of biological role, antioxidant protein with alkyl hydroperoxidase activity. Required for the reduction of the AhpC active site cysteine residues and for the regeneration of the AhpC enzyme activity. This Hyphomonas neptunium (strain ATCC 15444) protein is Alkyl hydroperoxide reductase AhpD.